The chain runs to 185 residues: Ribose 1,5-bisphosphate phosphokinase PhnN (185 aa).

10-17 (GPSGSGKD) contacts ATP.

Belongs to the ribose 1,5-bisphosphokinase family.

The enzyme catalyses alpha-D-ribose 1,5-bisphosphate + ATP = 5-phospho-alpha-D-ribose 1-diphosphate + ADP. Its pathway is metabolic intermediate biosynthesis; 5-phospho-alpha-D-ribose 1-diphosphate biosynthesis; 5-phospho-alpha-D-ribose 1-diphosphate from D-ribose 5-phosphate (route II): step 3/3. Functionally, catalyzes the phosphorylation of ribose 1,5-bisphosphate to 5-phospho-D-ribosyl alpha-1-diphosphate (PRPP). The protein is Ribose 1,5-bisphosphate phosphokinase PhnN of Escherichia coli O157:H7.